A 247-amino-acid polypeptide reads, in one-letter code: Fasciclin-like arabinogalactan protein 13 (247 aa).

A signal peptide spans 1–25; the sequence is MATTPLLLLLLTAVFLSTEITAQRA. The region spanning 34–179 is the FAS1 domain; it reads PINITAILEK…LAVYVVDMVL (146 aa). Asn36, Asn55, Asn68, Asn141, and Asn150 each carry an N-linked (GlcNAc...) asparagine glycan. The tract at residues 189–228 is disordered; sequence KISPMAPPPKSKSPDVSDDSESSKKAAAPSESEKSGSGEM. Gly224 carries GPI-anchor amidated glycine lipidation. A propeptide spans 225–247 (removed in mature form); the sequence is SGEMNTGLGLGLGLVVLCLKFLL.

Belongs to the fasciclin-like AGP family.

The protein localises to the cell membrane. Its function is as follows. May be a cell surface adhesion protein. The protein is Fasciclin-like arabinogalactan protein 13 (FLA13) of Arabidopsis thaliana (Mouse-ear cress).